We begin with the raw amino-acid sequence, 1151 residues long: Phospholipid-transporting ATPase NEO1 (1151 aa).

2 disordered regions span residues 1-21 and 73-95; these read MPNP…NNNQ and LDNF…THPL. Residues 1–184 lie on the Extracellular side of the membrane; the sequence is MPNPPSFKSH…LSNAKYNAVT (184 aa). The span at 12–21 shows a compositional bias: polar residues; that stretch reads QNLFNSNNNQ. The segment at 51–104 is required for endosome-to-Golgi sorting; it reads EPLSKHNTVGDRESFEMRTVDDLDNFSNHSSDSHRKSSNTDTHPLMYDNRLSQD. At serine 102 the chain carries Phosphoserine. A helical membrane pass occupies residues 185-205; that stretch reads FVPTLLYEQFKFFYNLYFLVV. The Cytoplasmic portion of the chain corresponds to 206 to 209; the sequence is ALSQ. Residues 210 to 230 traverse the membrane as a helical segment; the sequence is AVPALRIGYLSSYIVPLAFVL. Residues 231–367 are Extracellular-facing; the sequence is TVTMAKEAID…TSNPLSVDNT (137 aa). A helical transmembrane segment spans residues 368–388; sequence LWANTVLASSGFCIACVVYTG. Residues 389-416 lie on the Cytoplasmic side of the membrane; it reads RDTRQAMNTTTAKVKTGLLELEINSISK. A helical transmembrane segment spans residues 417–437; it reads ILCACVFALSILLVAFAGFHN. A topological domain (extracellular) is located at residue aspartate 438. A helical transmembrane segment spans residues 439–459; it reads DWYIDILRYLILFSTIIPVSL. Topologically, residues 460–947 are cytoplasmic; the sequence is RVNLDLAKSV…KLAQFVMHRG (488 aa). Aspartate 503 acts as the 4-aspartylphosphate intermediate in catalysis. Aspartate 503, lysine 504, and threonine 505 together coordinate ATP. Aspartate 503 serves as a coordination point for Mg(2+). Mg(2+) is bound at residue threonine 505. A Phosphoserine modification is found at serine 551. 12 residues coordinate ATP: glutamate 597, phenylalanine 640, serine 642, lysine 645, lysine 664, arginine 693, threonine 694, threonine 774, glycine 775, aspartate 776, arginine 856, and lysine 862. Residue aspartate 882 coordinates Mg(2+). 2 residues coordinate ATP: asparagine 885 and aspartate 886. Aspartate 886 is a binding site for Mg(2+). Residues 948–968 traverse the membrane as a helical segment; sequence LIIAICQAVYSICSLFEPIAL. Topologically, residues 969 to 970 are extracellular; the sequence is YQ. A helical transmembrane segment spans residues 971-991; sequence GWLMVGYATCYTMAPVFSLTL. Residues 992–1020 are Cytoplasmic-facing; the sequence is DHDIEESLTKIYPELYKELTEGKSLSYKT. Residues 1021–1041 traverse the membrane as a helical segment; the sequence is FFVWVLLSLFQGSVIQLFSQA. The Extracellular segment spans residues 1042-1052; the sequence is FTSLLDTDFTR. The helical transmembrane segment at 1053 to 1073 threads the bilayer; sequence MVAISFTALVVNELIMVALEI. Residues 1074–1078 are Cytoplasmic-facing; sequence YTWNK. A helical transmembrane segment spans residues 1079-1099; that stretch reads TMLVTEIATLLFYIVSVPFLG. The Extracellular portion of the chain corresponds to 1100–1109; that stretch reads DYFDLGYMTT. The chain crosses the membrane as a helical span at residues 1110–1130; the sequence is VNYYAGLLVILLISIFPVWTA. Residues 1131–1151 are Cytoplasmic-facing; sequence KAIYRRLHPPSYAKVQEFATP. Residues 1131 to 1151 are required for endosomal targeting; the sequence is KAIYRRLHPPSYAKVQEFATP.

The protein belongs to the cation transport ATPase (P-type) (TC 3.A.3) family. Type IV subfamily. Interacts with MON2. Interacts with ANY1. Functions without a CDC50/LEM3 family accessory subunit. The cofactor is Mg(2+).

It is found in the endosome membrane. It localises to the golgi apparatus membrane. It catalyses the reaction ATP + H2O + phospholipidSide 1 = ADP + phosphate + phospholipidSide 2.. The catalysed reaction is a 1,2-diacyl-sn-glycero-3-phospho-L-serine(out) + ATP + H2O = a 1,2-diacyl-sn-glycero-3-phospho-L-serine(in) + ADP + phosphate + H(+). The enzyme catalyses a 1,2-diacyl-sn-glycero-3-phosphoethanolamine(out) + ATP + H2O = a 1,2-diacyl-sn-glycero-3-phosphoethanolamine(in) + ADP + phosphate + H(+). Functionally, flippase that catalyzes the hydrolysis of ATP coupled to the transport of lysophosphatidylserine, phosphatidylethanolamine, and phosphatidylserine from the lumenal to the cytosolic leaflet of the Golgi apparatus membrane and ensures the maintenance of asymmetric distribution of phospholipids. Does not appear to transport phosphatidylcholine or sphingomyelin. May be involved in recycling from endosomes by driving the formation of SNX3-dependent recycling tubules. Required for COPI retrograde transport from the Golgi to the endoplasmic reticulum, Golgi-endosome trafficking, and Golgi-dependent protein glycosylation. The sequence is that of Phospholipid-transporting ATPase NEO1 from Saccharomyces cerevisiae (strain ATCC 204508 / S288c) (Baker's yeast).